Reading from the N-terminus, the 123-residue chain is Large ribosomal subunit protein uL18 (123 aa).

The protein belongs to the universal ribosomal protein uL18 family. In terms of assembly, part of the 50S ribosomal subunit; part of the 5S rRNA/L5/L18/L25 subcomplex. Contacts the 5S and 23S rRNAs.

This is one of the proteins that bind and probably mediate the attachment of the 5S RNA into the large ribosomal subunit, where it forms part of the central protuberance. This is Large ribosomal subunit protein uL18 from Bifidobacterium longum (strain DJO10A).